The primary structure comprises 184 residues: Transmembrane protein 140 (184 aa).

Residues 1–12 (MAISRVWRNRLS) are Cytoplasmic-facing. A helical transmembrane segment spans residues 13-33 (FMAIMILVAMVLSLMSYALLW). The Extracellular segment spans residues 34-83 (KAGNLTDVPNLRIGFYNFCLWKEDIGSLECYNFPELGVLGIPQVGLALAR). Residue Asn37 is glycosylated (N-linked (GlcNAc...) asparagine). Residues 84-104 (LGVYGALVLAVFVPLPLLLAQ) form a helical membrane-spanning segment. Topologically, residues 105-117 (CNSDEGEWRLAVG) are cytoplasmic. Residues 118 to 138 (FLGASSVLLAGGLSLFLFLVW) traverse the membrane as a helical segment. Topologically, residues 139–149 (KWLRLSFLGPG) are extracellular. The chain crosses the membrane as a helical span at residues 150–170 (FLSLCLAQALLIILLMAMVMF). Residues 171 to 184 (PPRDKKDKNHWENC) are Cytoplasmic-facing.

It localises to the membrane. In Rattus norvegicus (Rat), this protein is Transmembrane protein 140 (Tmem140).